A 223-amino-acid polypeptide reads, in one-letter code: uncharacterized protein (223 aa).

This is an uncharacterized protein from Mycoplasma pneumoniae (strain ATCC 29342 / M129 / Subtype 1) (Mycoplasmoides pneumoniae).